A 516-amino-acid chain; its full sequence is Acetylcholine receptor subunit alpha-like (516 aa).

Positions 1–21 (MRSVTKYYLHGVVLFATGCAG) are cleaved as a signal peptide. Residues 22–243 (NPDAKRLYDD…ITMRRKTLFY (222 aa)) are Extracellular-facing. Residues asparagine 45 and asparagine 132 are each glycosylated (N-linked (GlcNAc...) asparagine). Cystine bridges form between cysteine 149/cysteine 163 and cysteine 222/cysteine 223. An N-linked (GlcNAc...) asparagine glycan is attached at asparagine 233. 3 helical membrane-spanning segments follow: residues 244 to 264 (TVNLIIPCMGISFLTVLVFYL), 274 to 294 (LSISILLSLTVFFLLLAEIIP), and 306 to 326 (FVLFTMILDTFSICVTVVVLN). At 327 to 465 (VHFRSPQTHT…WKYVAMVLDR (139 aa)) the chain is on the cytoplasmic side. A helical membrane pass occupies residues 466 to 486 (PFLWIFTLAVVVGSAGIILQA).

It belongs to the ligand-gated ion channel (TC 1.A.9) family. Acetylcholine receptor (TC 1.A.9.1) subfamily.

It is found in the postsynaptic cell membrane. The protein localises to the cell membrane. Its function is as follows. After binding acetylcholine, the AChR responds by an extensive change in conformation that affects all subunits and leads to opening of an ion-conducting channel across the plasma membrane. The chain is Acetylcholine receptor subunit alpha-like (ARA1) from Manduca sexta (Tobacco hawkmoth).